We begin with the raw amino-acid sequence, 165 residues long: Nucleotide-binding protein TGRD_519 (165 aa).

It belongs to the YajQ family.

Functionally, nucleotide-binding protein. This is Nucleotide-binding protein TGRD_519 from Endomicrobium trichonymphae.